The primary structure comprises 169 residues: Disulfide bond formation protein B 1 (169 aa).

Over 1–13 the chain is Cytoplasmic; that stretch reads MSALLKPLDNRLF. The chain crosses the membrane as a helical span at residues 14-30; the sequence is WPAVAIGGLLILAFVLY. Residues 31–48 lie on the Periplasmic side of the membrane; the sequence is LQHVRGFAPCSLCIFIRL. A disulfide bridge connects residues cysteine 40 and cysteine 43. Residues 49–64 form a helical membrane-spanning segment; it reads DVLGLVLAGIVGSLAP. The Cytoplasmic segment spans residues 65-71; it reads RSRIAGG. The helical transmembrane segment at 72-89 threads the bilayer; sequence IAALGMLAASLGGIYHAW. At 90 to 145 the chain is on the periplasmic side; sequence SLVAEEKLAAQGMGSCKMFMGFPEWIPLDTWLPQVFQPEGLCGEVVWTLLGQSMAV. A disulfide bridge connects residues cysteine 105 and cysteine 131. Residues 146–164 form a helical membrane-spanning segment; the sequence is WSLALFVFCLLVLAAKLAF. Residues 165 to 169 are Cytoplasmic-facing; it reads GRRTA.

The protein belongs to the DsbB family.

It localises to the cell inner membrane. Its function is as follows. Required for disulfide bond formation in some periplasmic proteins. Acts by oxidizing the DsbA protein. This chain is Disulfide bond formation protein B 1, found in Pseudomonas aeruginosa (strain UCBPP-PA14).